Here is a 349-residue protein sequence, read N- to C-terminus: tRNA pseudouridine synthase D (349 aa).

F27 contacts substrate. The active-site Nucleophile is D80. N129 contributes to the substrate binding site. The TRUD domain maps to 155-303 (GVPNYFGAQR…VEAARRAMLL (149 aa)). F329 contributes to the substrate binding site.

This sequence belongs to the pseudouridine synthase TruD family.

The catalysed reaction is uridine(13) in tRNA = pseudouridine(13) in tRNA. In terms of biological role, responsible for synthesis of pseudouridine from uracil-13 in transfer RNAs. This chain is tRNA pseudouridine synthase D, found in Escherichia coli O127:H6 (strain E2348/69 / EPEC).